A 60-amino-acid polypeptide reads, in one-letter code: Translational regulator CsrA (60 aa).

It belongs to the CsrA/RsmA family. As to quaternary structure, homodimer; the beta-strands of each monomer intercalate to form a hydrophobic core, while the alpha-helices form wings that extend away from the core.

The protein resides in the cytoplasm. Functionally, a key translational regulator that binds mRNA to regulate translation initiation and/or mRNA stability. Mediates global changes in gene expression, shifting from rapid growth to stress survival by linking envelope stress, the stringent response and the catabolite repression systems. Usually binds in the 5'-UTR; binding at or near the Shine-Dalgarno sequence prevents ribosome-binding, repressing translation, binding elsewhere in the 5'-UTR can activate translation and/or stabilize the mRNA. Its function is antagonized by small RNA(s). The polypeptide is Translational regulator CsrA (Histophilus somni (strain 2336) (Haemophilus somnus)).